Consider the following 318-residue polypeptide: BES1/BZR1 homolog protein 2 (318 aa).

Gly residues predominate over residues 1–13 (MAAGGGGGGGGSS). 4 disordered regions span residues 1-34 (MAAGGGGGGGGSSSGRTPTWKERENNKKRERRRR), 84-133 (FKPP…PSPS), 166-195 (NSAPVTPPLSSPTSRGSKRKLTSEQLPNGG), and 209-231 (APSSPTRRAGHQTPPTIPECDES). Residues 16-97 (RTPTWKEREN…ASDISGTPTN (82 aa)) are required for DNA-binding. Positions 91–101 (ISGTPTNFSTN) are enriched in polar residues. The segment covering 102–133 (SSIQPSPQSSAFPSPAPSYHGSPVSSSFPSPS) has biased composition (low complexity).

It belongs to the BZR/LAT61 family. In terms of processing, phosphorylated. Phosphorylation increases protein degradation.

This Arabidopsis thaliana (Mouse-ear cress) protein is BES1/BZR1 homolog protein 2 (BEH2).